A 450-amino-acid chain; its full sequence is Phosphoglucosamine mutase (450 aa).

Residue S102 is the Phosphoserine intermediate of the active site. Residues S102, D243, D245, and D247 each coordinate Mg(2+). Residue S102 is modified to Phosphoserine.

This sequence belongs to the phosphohexose mutase family. Mg(2+) is required as a cofactor. Post-translationally, activated by phosphorylation.

It carries out the reaction alpha-D-glucosamine 1-phosphate = D-glucosamine 6-phosphate. Catalyzes the conversion of glucosamine-6-phosphate to glucosamine-1-phosphate. The protein is Phosphoglucosamine mutase of Rhizobium etli (strain CIAT 652).